The chain runs to 349 residues: MAQQAPDREKALELAMAQIDKNFGKGSVMRLGEEVRQPISVIPTGSISLDVALGIGGLPRGRVIEIYGPESSGKTTVALHAVANAQAAGGIAAFIDAEHALDPEYAKKLGVDTDSLLVSQPDTGEQALEIADMLVRSGALDIIVIDSVAALVPRAEIEGEMGDSHVGLQARLMSQALRKMTGALNNSGTTAIFINQLREKIGVMFGSPETTTGGKALKFYASVRLDVRRIETLKDGTDAVGNRTRVKVVKNKVSPPFKQAEFDILYGQGISREGSLIDMGVEHGFIRKSGSWFTYEGEQLGQGKENARKFLLENTDVANEIEKKIKEKLGIGAVVTAEADDVLPAPVDF.

71 to 75 (SSGKT) contacts phosphate. ATP-binding positions include 71–76 (SSGKTT) and 102–105 (DPEY). Gln-196 is a phosphate binding site.

The protein belongs to the RecA family. As to quaternary structure, polymerizes non-specifically on ssDNA to form filaments. Interacts with and activates LexA leading to autocatalytic cleavage of LexA, which derepresses the SOS regulon and activates DNA repair.

It localises to the cytoplasm. In terms of biological role, required for homologous recombination (HR) and the bypass of mutagenic DNA lesions (double strand breaks, DSB) by the SOS response. Can catalyze the hydrolysis of ATP in the presence of single-stranded DNA, the ATP-dependent uptake of single-stranded DNA by duplex DNA, and the ATP-dependent hybridization of homologous single-stranded DNAs. Numerous X-ray crystals have been resolved under different conditions which indicate the flexibility of the protein, essential to its function. Gln-196 contributes to this plasticity by acting as a switch residue, which transmits the effect of nucleotide binding to the DNA-binding region. This is Protein RecA from Mycolicibacterium smegmatis (strain ATCC 700084 / mc(2)155) (Mycobacterium smegmatis).